The following is a 520-amino-acid chain: Cilia- and flagella-associated protein 157 (520 aa).

A disordered region spans residues M1–K22. Basic and acidic residues predominate over residues A10–K22. 2 coiled-coil regions span residues L33–K189 and L236–S372. The disordered stretch occupies residues P416–D453. Positions P437–D453 are enriched in polar residues.

This sequence belongs to the CFAP157 family. As to quaternary structure, interacts with TUBB and TUBA4A. Interacts with CEP350.

Its subcellular location is the cytoplasm. It localises to the cytoskeleton. The protein localises to the cilium basal body. Its function is as follows. Specifically required during spermatogenesis for flagellum morphogenesis and sperm motility. May be required to suppress the formation of supernumerary axonemes and ensure a correct ultrastructure. In Homo sapiens (Human), this protein is Cilia- and flagella-associated protein 157.